The chain runs to 308 residues: Rhamnose-binding lectin (308 aa).

The first 23 residues, methionine 1–glycine 23, serve as a signal peptide directing secretion. 3 consecutive SUEL-type lectin domains span residues isoleucine 27 to cysteine 115, isoleucine 123 to threonine 213, and valine 218 to valine 308. The N-linked (GlcNAc...) asparagine glycan is linked to asparagine 110.

In terms of assembly, homotrimer. In terms of tissue distribution, expressed in eggs, but not in liver.

The protein resides in the secreted. Functionally, lectin that binds L-rhamnose. Also binds monosaccharides possessing steric similarity to the hydroxyl group orientation at C2 and C4 of the pyranose ring structure of L-rhamnose, such as L-mannose and L-lyxose. This Silurus asotus (Amur catfish) protein is Rhamnose-binding lectin.